We begin with the raw amino-acid sequence, 252 residues long: Phosphate import ATP-binding protein PstB (252 aa).

The region spanning 5–247 (VKIDKLNVHF…PEKKQTEDYI (243 aa)) is the ABC transporter domain. 37 to 44 (GPSGCGKS) provides a ligand contact to ATP.

The protein belongs to the ABC transporter superfamily. Phosphate importer (TC 3.A.1.7) family. The complex is composed of two ATP-binding proteins (PstB), two transmembrane proteins (PstC and PstA) and a solute-binding protein (PstS).

It is found in the cell inner membrane. The enzyme catalyses phosphate(out) + ATP + H2O = ADP + 2 phosphate(in) + H(+). In terms of biological role, part of the ABC transporter complex PstSACB involved in phosphate import. Responsible for energy coupling to the transport system. The polypeptide is Phosphate import ATP-binding protein PstB (Geobacter metallireducens (strain ATCC 53774 / DSM 7210 / GS-15)).